We begin with the raw amino-acid sequence, 143 residues long: Large-conductance mechanosensitive channel (143 aa).

Transmembrane regions (helical) follow at residues 10-30 (FAVKGNVMDLAVGVIIGGAFS) and 89-109 (GSFITVAINFVILAFIIFLMV).

The protein belongs to the MscL family. As to quaternary structure, homopentamer.

Its subcellular location is the cell inner membrane. In terms of biological role, channel that opens in response to stretch forces in the membrane lipid bilayer. May participate in the regulation of osmotic pressure changes within the cell. The protein is Large-conductance mechanosensitive channel of Burkholderia ambifaria (strain ATCC BAA-244 / DSM 16087 / CCUG 44356 / LMG 19182 / AMMD) (Burkholderia cepacia (strain AMMD)).